The primary structure comprises 61 residues: Adipokinetic prohormone type 2 (61 aa).

An N-terminal signal peptide occupies residues 1-22 (MRQGCALTLMLLVVVCAALSAA). Glutamine 23 carries the post-translational modification Pyrrolidone carboxylic acid. Residue tryptophan 30 is modified to Tryptophan amide.

It belongs to the AKH/HRTH/RPCH family. In terms of assembly, adipokinetic hormone precursor-related peptide (APRP) can form three type of disulfide-bond dimers: p1 (alpha-alpha), p2 (alpha-beta), and p3 (beta-beta).

It is found in the secreted. Functionally, this hormone, released from cells in the corpora cardiaca, causes release of diglycerides from the fat body and stimulation of muscles to use these diglycerides as an energy source during energy-demanding processes. The sequence is that of Adipokinetic prohormone type 2 from Schistocerca nitens (Vagrant locust).